The chain runs to 333 residues: C4-dicarboxylate-binding periplasmic protein DctP (333 aa).

The N-terminal stretch at 1-26 (MLTRRILGALVGATALSLALSVPALA) is a signal peptide.

The protein belongs to the bacterial solute-binding protein 7 family. In terms of assembly, the complex comprises the extracytoplasmic solute receptor protein DctP, and the two transmembrane proteins DctQ and DctM.

The protein resides in the periplasm. Functionally, part of the tripartite ATP-independent periplasmic (TRAP) transport system DctPQM involved in C4-dicarboxylates uptake. Binds C4-dicarboxylates such as fumarate, succinate, L-malate and D-malate. This Rhodobacter capsulatus (Rhodopseudomonas capsulata) protein is C4-dicarboxylate-binding periplasmic protein DctP.